We begin with the raw amino-acid sequence, 209 residues long: Uracil phosphoribosyltransferase (209 aa).

5-phospho-alpha-D-ribose 1-diphosphate-binding positions include Arg79, Arg104, and Asp131–Ser139. Uracil is bound by residues Ile194 and Gly199–Ala201. Asp200 lines the 5-phospho-alpha-D-ribose 1-diphosphate pocket.

This sequence belongs to the UPRTase family. The cofactor is Mg(2+).

The enzyme catalyses UMP + diphosphate = 5-phospho-alpha-D-ribose 1-diphosphate + uracil. It functions in the pathway pyrimidine metabolism; UMP biosynthesis via salvage pathway; UMP from uracil: step 1/1. Allosterically activated by GTP. In terms of biological role, catalyzes the conversion of uracil and 5-phospho-alpha-D-ribose 1-diphosphate (PRPP) to UMP and diphosphate. In Geobacillus kaustophilus (strain HTA426), this protein is Uracil phosphoribosyltransferase.